Reading from the N-terminus, the 952-residue chain is Aminopeptidase 2, mitochondrial (952 aa).

Residues Met1–Ile52 constitute a mitochondrion transit peptide. Substrate-binding positions include Glu228 and Gly360–Asn364. Residue Asn381 is glycosylated (N-linked (GlcNAc...) asparagine). Zn(2+) is bound at residue His396. Glu397 serves as the catalytic Proton acceptor. Zn(2+) is bound by residues His400 and Glu419. N-linked (GlcNAc...) asparagine glycosylation is present at Asn713.

It belongs to the peptidase M1 family. The cofactor is Zn(2+).

Its subcellular location is the periplasm. The protein localises to the cytoplasm. It is found in the mitochondrion. Functionally, involved in the cellular supply of leucine from externally offered leucine-containing dipeptide substrates. In Saccharomyces cerevisiae (strain ATCC 204508 / S288c) (Baker's yeast), this protein is Aminopeptidase 2, mitochondrial (APE2).